The following is a 344-amino-acid chain: 4-hydroxy-3-methylbut-2-en-1-yl diphosphate synthase (flavodoxin) (344 aa).

[4Fe-4S] cluster contacts are provided by Cys253, Cys256, Cys288, and Glu295.

This sequence belongs to the IspG family. The cofactor is [4Fe-4S] cluster.

It catalyses the reaction (2E)-4-hydroxy-3-methylbut-2-enyl diphosphate + oxidized [flavodoxin] + H2O + 2 H(+) = 2-C-methyl-D-erythritol 2,4-cyclic diphosphate + reduced [flavodoxin]. The protein operates within isoprenoid biosynthesis; isopentenyl diphosphate biosynthesis via DXP pathway; isopentenyl diphosphate from 1-deoxy-D-xylulose 5-phosphate: step 5/6. Its function is as follows. Converts 2C-methyl-D-erythritol 2,4-cyclodiphosphate (ME-2,4cPP) into 1-hydroxy-2-methyl-2-(E)-butenyl 4-diphosphate. This chain is 4-hydroxy-3-methylbut-2-en-1-yl diphosphate synthase (flavodoxin), found in Thermotoga petrophila (strain ATCC BAA-488 / DSM 13995 / JCM 10881 / RKU-1).